The primary structure comprises 295 residues: G1/S-specific cyclin-D1 (295 aa).

Residues 28–152 form the Cyclin N-terminal domain; that stretch reads LRAMLKAEET…LLVNKLKWNL (125 aa). Residues 262 to 295 are disordered; it reads AQQNMDPKAAEEEEEEEEEVDLACTPTDVRDVDI. Lys269 is covalently cross-linked (Glycyl lysine isopeptide (Lys-Gly) (interchain with G-Cter in ubiquitin)). The span at 272–282 shows a compositional bias: acidic residues; sequence EEEEEEEEEVD. Thr286 carries the phosphothreonine modification.

It belongs to the cyclin family. Cyclin D subfamily. Interacts with either CDK4 or CDK6 protein kinase to form a serine/threonine kinase holoenzyme complex. The cyclin subunit imparts substrate specificity to the complex. Component of the ternary complex CCND1/CDK4/CDKN1B required for nuclear translocation and modulation of CDK4-mediated kinase activity. Interacts directly with CDKN1B. Can form similar complexes with either CDKN1A or CDKN2A. Interacts with UHRF2; the interaction ubiquitinates CCND1 and appears to occur independently of phosphorylation. Interacts with USP2. Interacts (via cyclin N-terminal domain) with INSM1 (via N-terminal region); the interaction competes with the binding of CCND1 to CDK4 during cell cycle progression and inhibits CDK4 activity. Interacts with CDK4; the interaction is prevented with the binding of CCND1 to INSM1 during cell cycle progression. Post-translationally, phosphorylation at Thr-286 by MAP kinases is required for ubiquitination and degradation by the DCX(AMBRA1) complex. It also plays an essential role for recognition by the FBXO31 component of SCF (SKP1-cullin-F-box) protein ligase complex following DNA damage. In terms of processing, ubiquitinated at Lys-269 by the DCX(AMBRA1) complex during the transition from G1 to S cell phase, leading to its degradation: ubiquitination is dependent on Thr-286 phosphorylation. The DCX(AMBRA1) complex represents the major regulator of CCND1 stability during the G1/S transition. Also ubiquitinated by the SCF(FBXO4) and Cul7-RING(FBXW8) ubiquitin-protein ligase complexes. Following DNA damage it is ubiquitinated by the SCF(FBXO31) protein ligase complex. SCF(FBXO31) ubiquitination is dependent on Thr-286 phosphorylation. Ubiquitinated also by UHRF2 apparently in a phosphorylation-independent manner. Ubiquitination leads to its degradation and G1 arrest. Deubiquitinated by USP2; leading to its stabilization.

It is found in the nucleus. Its subcellular location is the cytoplasm. The protein localises to the nucleus membrane. In terms of biological role, regulatory component of the cyclin D1-CDK4 (DC) complex that phosphorylates and inhibits members of the retinoblastoma (RB) protein family including RB1 and regulates the cell-cycle during G(1)/S transition. Phosphorylation of RB1 allows dissociation of the transcription factor E2F from the RB/E2F complex and the subsequent transcription of E2F target genes which are responsible for the progression through the G(1) phase. Hypophosphorylates RB1 in early G(1) phase. Cyclin D-CDK4 complexes are major integrators of various mitogenenic and antimitogenic signals. Also a substrate for SMAD3, phosphorylating SMAD3 in a cell-cycle-dependent manner and repressing its transcriptional activity. Component of the ternary complex, cyclin D1/CDK4/CDKN1B, required for nuclear translocation and activity of the cyclin D-CDK4 complex. Exhibits transcriptional corepressor activity with INSM1 on the NEUROD1 and INS promoters in a cell cycle-independent manner. This Pongo abelii (Sumatran orangutan) protein is G1/S-specific cyclin-D1 (CCND1).